Consider the following 400-residue polypeptide: Cytohesin-2 (400 aa).

The stretch at 10 to 63 forms a coiled coil; the sequence is DLTPEERMELENIRRRKQELLVEIQRLREELSEAMSEVEGLEANEGSKTLQRNR. An SEC7 domain is found at 72 to 201; the sequence is FNMDPKKGIQ…VIMLNTSLHN (130 aa). One can recognise a PH domain in the interval 259 to 376; the sequence is NPDREGWLLK…WIKSIQAAVS (118 aa). Residues 268-276, Arg-280, Tyr-291, Arg-301, Lys-339, Asn-350, and His-351 contribute to the a 1,2-diacyl-sn-glycero-3-phospho-(1D-myo-inositol-3,4,5-trisphosphate) site; that span reads KLGGGRVKT. The segment at 387–395 is C-terminal autoinhibitory region; it reads RKKRISVKK.

Heteromer. Composed of TAMALIN, CYTH2 and at least one GRM1. Interacts with ARRB1. Interacts with ARL4D; the interaction is direct. Directly interacts with CCDC120 through the coiled coil domain; this interaction stabilizes CCDC120, possibly by preventing its ubiquitination, and is required for neurite growth in neuroblastoma cells. Interacts with ARF1. Interacts with FRMD4A. Interacts (via N-terminal domain) with INAVA (via N-terminal domain). As to expression, widely expressed.

The protein resides in the cell membrane. The protein localises to the cytoplasm. It localises to the cell projection. Its subcellular location is the growth cone. It is found in the cell junction. The protein resides in the tight junction. The protein localises to the adherens junction. Its function is as follows. Acts as a guanine-nucleotide exchange factor (GEF). Promotes guanine-nucleotide exchange on ARF1, ARF3 and ARF6. Activates ARF factors through replacement of GDP with GTP. The cell membrane form, in association with ARL4 proteins, recruits ARF6 to the plasma membrane. Involved in neurite growth. This chain is Cytohesin-2, found in Homo sapiens (Human).